The chain runs to 103 residues: MHVKKGDKVQVITGKDKGKQGVILVAFPKQNRVIVEGVNIVKKHSKPSQLNPQGGIITKEAPIHVSNVMILDPKTGEPTRVGFKVEDGKKVRIAKKSGELLDK.

The protein belongs to the universal ribosomal protein uL24 family. Part of the 50S ribosomal subunit.

Its function is as follows. One of two assembly initiator proteins, it binds directly to the 5'-end of the 23S rRNA, where it nucleates assembly of the 50S subunit. Functionally, one of the proteins that surrounds the polypeptide exit tunnel on the outside of the subunit. This chain is Large ribosomal subunit protein uL24, found in Bacillus anthracis (strain A0248).